The sequence spans 150 residues: D-aminoacyl-tRNA deacylase (150 aa).

The Gly-cisPro motif, important for rejection of L-amino acids motif lies at 138–139 (GP).

This sequence belongs to the DTD family. As to quaternary structure, homodimer.

It is found in the cytoplasm. It carries out the reaction glycyl-tRNA(Ala) + H2O = tRNA(Ala) + glycine + H(+). It catalyses the reaction a D-aminoacyl-tRNA + H2O = a tRNA + a D-alpha-amino acid + H(+). In terms of biological role, an aminoacyl-tRNA editing enzyme that deacylates mischarged D-aminoacyl-tRNAs. Also deacylates mischarged glycyl-tRNA(Ala), protecting cells against glycine mischarging by AlaRS. Acts via tRNA-based rather than protein-based catalysis; rejects L-amino acids rather than detecting D-amino acids in the active site. By recycling D-aminoacyl-tRNA to D-amino acids and free tRNA molecules, this enzyme counteracts the toxicity associated with the formation of D-aminoacyl-tRNA entities in vivo and helps enforce protein L-homochirality. The protein is D-aminoacyl-tRNA deacylase of Bacteroides thetaiotaomicron (strain ATCC 29148 / DSM 2079 / JCM 5827 / CCUG 10774 / NCTC 10582 / VPI-5482 / E50).